Here is a 115-residue protein sequence, read N- to C-terminus: U3-lycotoxin-Ls1k (115 aa).

Residues 1–20 (MKSVLLFGVLLVTLFSYSSA) form the signal peptide. Positions 21–44 (EMLDDFDQADEDELLSLIEKEEAR) are excised as a propeptide. Intrachain disulfides connect Cys48–Cys63, Cys55–Cys72, Cys62–Cys87, and Cys74–Cys85.

It belongs to the neurotoxin 19 (CSTX) family. 01 subfamily. In terms of tissue distribution, expressed by the venom gland.

Its subcellular location is the secreted. In Lycosa singoriensis (Wolf spider), this protein is U3-lycotoxin-Ls1k.